The chain runs to 163 residues: UPF0262 protein RPD_4278 (163 aa).

Belongs to the UPF0262 family.

This Rhodopseudomonas palustris (strain BisB5) protein is UPF0262 protein RPD_4278.